A 794-amino-acid chain; its full sequence is Zinc finger protein 148 (794 aa).

Residue Lys-6 forms a Glycyl lysine isopeptide (Lys-Gly) (interchain with G-Cter in SUMO2) linkage. Ser-51 carries the phosphoserine modification. Glycyl lysine isopeptide (Lys-Gly) (interchain with G-Cter in SUMO2) cross-links involve residues Lys-88, Lys-115, and Lys-132. The C2H2-type 1 zinc-finger motif lies at 171–193 (HVCEHCNAAFRTNYHLQRHVFIH). Thr-194 is subject to Phosphothreonine. 2 consecutive C2H2-type zinc fingers follow at residues 199–221 (FQCS…EKIH) and 227–249 (FRCD…KRTH). Ser-250 carries the phosphoserine modification. A C2H2-type 4 zinc finger spans residues 255–278 (YQCEYCLQYFSRTDRVLKHKRMCH). Residue Lys-291 forms a Glycyl lysine isopeptide (Lys-Gly) (interchain with G-Cter in SUMO2) linkage. Residues 298-338 (EEDSGFSTSPKDNSLPKKKRQKTEKKSSGMDKESSLDKSDL) are disordered. Residues Ser-301 and Ser-306 each carry the phosphoserine modification. Lys-308 participates in a covalent cross-link: Glycyl lysine isopeptide (Lys-Gly) (interchain with G-Cter in SUMO2). A compositionally biased stretch (basic and acidic residues) spans 321-338 (EKKSSGMDKESSLDKSDL). Residue Lys-356 forms a Glycyl lysine isopeptide (Lys-Gly) (interchain with G-Cter in SUMO1); alternate linkage. Lys-356 participates in a covalent cross-link: Glycyl lysine isopeptide (Lys-Gly) (interchain with G-Cter in SUMO2); alternate. A Glycyl lysine isopeptide (Lys-Gly) (interchain with G-Cter in SUMO2) cross-link involves residue Lys-402. Ser-412 bears the Phosphoserine mark. Residues Lys-421 and Lys-424 each participate in a glycyl lysine isopeptide (Lys-Gly) (interchain with G-Cter in SUMO2) cross-link. Positions 575-588 (SSEVPEVTQSENVG) are enriched in polar residues. The segment at 575–596 (SSEVPEVTQSENVGSSSQASSS) is disordered. Lys-607 bears the N6-acetyllysine mark. Ser-665 and Ser-784 each carry phosphoserine. Residues 775–794 (NDNRAGMTSSPDATTGQTFG) are disordered.

The protein belongs to the krueppel C2H2-type zinc-finger protein family. Interacts with HNRNPDL. Interacts with the 5FMC complex; the interaction requires association with CHTOP. Interacts with CAVIN1. In terms of processing, sumoylated with SUMO2. Desumoylated by SENP3, resulting in the stimulation of transcription of its target genes.

It is found in the nucleus. Involved in transcriptional regulation. Represses the transcription of a number of genes including gastrin, stromelysin and enolase. Binds to the G-rich box in the enhancer region of these genes. This is Zinc finger protein 148 (ZNF148) from Bos taurus (Bovine).